A 309-amino-acid chain; its full sequence is GTP cyclohydrolase MptA 2 (309 aa).

The protein belongs to the GTP cyclohydrolase IV family. As to quaternary structure, homodimer. Fe(2+) is required as a cofactor.

The catalysed reaction is GTP + H2O = 7,8-dihydroneopterin 2',3'-cyclic phosphate + formate + diphosphate + H(+). The protein operates within cofactor biosynthesis; 5,6,7,8-tetrahydromethanopterin biosynthesis. Functionally, converts GTP to 7,8-dihydro-D-neopterin 2',3'-cyclic phosphate, the first intermediate in the biosynthesis of coenzyme methanopterin. The polypeptide is GTP cyclohydrolase MptA 2 (Methanocella arvoryzae (strain DSM 22066 / NBRC 105507 / MRE50)).